We begin with the raw amino-acid sequence, 272 residues long: MNMQLGSPVSVHPIPIYQGNYVWVMRHTSQNSVVVVDPGSASEVIEYITQHELTIASIIITHSHWDHVTGIAELCANLQLWRDEEPVVYGPSVIQDVTHPVEDGDRIELCKGVDVPSLQVIATPGHMPEHLSYLLPLTTPKLFCGDTLFSCGCGRILQGTHEQLRTSLDAISALPSQTEVYCTHEYTLTNIKFARTVEPQSQALIDYEQRVRSLRKNDLPSIPTTIEREKALNPFLRYKELSIQQAVENHLRLKGLTAADVFKHLRLWKDSF.

7 residues coordinate Zn(2+): histidine 62, histidine 64, aspartate 66, histidine 67, histidine 126, aspartate 146, and histidine 184.

The protein belongs to the metallo-beta-lactamase superfamily. Glyoxalase II family. Monomer. The cofactor is Zn(2+).

It carries out the reaction an S-(2-hydroxyacyl)glutathione + H2O = a 2-hydroxy carboxylate + glutathione + H(+). The protein operates within secondary metabolite metabolism; methylglyoxal degradation; (R)-lactate from methylglyoxal: step 2/2. Thiolesterase that catalyzes the hydrolysis of S-D-lactoyl-glutathione to form glutathione and D-lactic acid. The chain is Hydroxyacylglutathione hydrolase from Saccharophagus degradans (strain 2-40 / ATCC 43961 / DSM 17024).